We begin with the raw amino-acid sequence, 507 residues long: Probable serine/threonine-protein kinase DDB_G0268078 (507 aa).

The Protein kinase domain maps to 4-286 (YQFIKQVGDG…PLQALQHRYF (283 aa)). ATP-binding positions include 10–18 (VGDGAYGDV) and Lys-33. The Proton acceptor role is filled by Asp-125. Positions 323–347 (NYSNNNNNNNLNSNSENLNNVNKNN) are enriched in low complexity. Disordered regions lie at residues 323–364 (NYSN…PKNS), 381–404 (NVNNNNNNYNSNTTSGYYNQKLDS), and 428–507 (QQPP…NSKL). Positions 348–361 (QQPHSPQKIQTPKP) are enriched in polar residues. The segment covering 381 to 399 (NVNNNNNNYNSNTTSGYYN) has biased composition (low complexity). Residues 429 to 450 (QPPPQSQPPQSQPPPQSQPPPI) are compositionally biased toward pro residues. The segment covering 451–470 (LTQQQQQQQQQQQQQQQLPS) has biased composition (low complexity). Composition is skewed to polar residues over residues 471–481 (KTTIYHNTNHL) and 491–507 (RGISPQFYNETTNNSKL).

Belongs to the protein kinase superfamily. CMGC Ser/Thr protein kinase family. CDC2/CDKX subfamily.

The enzyme catalyses L-seryl-[protein] + ATP = O-phospho-L-seryl-[protein] + ADP + H(+). It catalyses the reaction L-threonyl-[protein] + ATP = O-phospho-L-threonyl-[protein] + ADP + H(+). The chain is Probable serine/threonine-protein kinase DDB_G0268078 from Dictyostelium discoideum (Social amoeba).